A 340-amino-acid chain; its full sequence is Glycerol-3-phosphate dehydrogenase [NAD(P)+] (340 aa).

The NADPH site is built by Ser-14, Phe-15, Arg-35, and Lys-108. Residues Lys-108 and Gly-136 each coordinate sn-glycerol 3-phosphate. An NADPH-binding site is contributed by Ala-140. Residues Lys-191, Asp-244, Ser-254, Arg-255, and Asn-256 each contribute to the sn-glycerol 3-phosphate site. The active-site Proton acceptor is Lys-191. Arg-255 lines the NADPH pocket. The NADPH site is built by Val-279 and Glu-281.

Belongs to the NAD-dependent glycerol-3-phosphate dehydrogenase family.

It is found in the cytoplasm. The catalysed reaction is sn-glycerol 3-phosphate + NAD(+) = dihydroxyacetone phosphate + NADH + H(+). The enzyme catalyses sn-glycerol 3-phosphate + NADP(+) = dihydroxyacetone phosphate + NADPH + H(+). The protein operates within membrane lipid metabolism; glycerophospholipid metabolism. Catalyzes the reduction of the glycolytic intermediate dihydroxyacetone phosphate (DHAP) to sn-glycerol 3-phosphate (G3P), the key precursor for phospholipid synthesis. In Azotobacter vinelandii (strain DJ / ATCC BAA-1303), this protein is Glycerol-3-phosphate dehydrogenase [NAD(P)+].